Here is a 169-residue protein sequence, read N- to C-terminus: GTP-dependent dephospho-CoA kinase (169 aa).

GTP is bound by residues D45, D64, and E121.

Belongs to the GTP-dependent DPCK family.

The enzyme catalyses 3'-dephospho-CoA + GTP = GDP + CoA + H(+). Its pathway is cofactor biosynthesis; coenzyme A biosynthesis. Catalyzes the GTP-dependent phosphorylation of the 3'-hydroxyl group of dephosphocoenzyme A to form coenzyme A (CoA). In Methanobrevibacter smithii (strain ATCC 35061 / DSM 861 / OCM 144 / PS), this protein is GTP-dependent dephospho-CoA kinase.